Here is a 1037-residue protein sequence, read N- to C-terminus: Probable inorganic carbon transporter subunit DabA 2 (1037 aa).

Zn(2+)-binding residues include Cys-460, Asp-462, His-719, and Cys-734.

Belongs to the inorganic carbon transporter (TC 9.A.2) DabA family. In terms of assembly, forms a complex with DabB. Zn(2+) is required as a cofactor.

It is found in the cell inner membrane. In terms of biological role, part of an energy-coupled inorganic carbon pump. The chain is Probable inorganic carbon transporter subunit DabA 2 from Nitrobacter winogradskyi (strain ATCC 25391 / DSM 10237 / CIP 104748 / NCIMB 11846 / Nb-255).